Reading from the N-terminus, the 498-residue chain is Fascin-3 (498 aa).

This sequence belongs to the fascin family. In terms of tissue distribution, expressed in testis.

The protein resides in the cytoplasm. It is found in the cytoskeleton. Functionally, acts as an actin bundling protein. This chain is Fascin-3 (FSCN3), found in Homo sapiens (Human).